Consider the following 392-residue polypeptide: Protein O-glucosyltransferase 1 (392 aa).

An N-terminal signal peptide occupies residues 1–23; it reads MERLSGCRLRPWMLLLLLFPVQG. 4 disulfides stabilise this stretch: Cys49/Cys56, Cys54/Cys357, Cys102/Cys108, and Cys263/Cys286. Asn53 is a glycosylation site (N-linked (GlcNAc...) asparagine). The segment at 103 to 107 is interaction with the consensus sequence C-X-S-X-[PA]-C in peptide substrates; that stretch reads MFPSR. Asp133 (proton donor/acceptor) is an active-site residue. Residues 172 to 178 form an interaction with the consensus sequence C-X-S-X-[PA]-C in peptide substrates region; sequence AVWPLYP. UDP-alpha-D-glucose is bound at residue Tyr177. A glycan (N-linked (GlcNAc...) asparagine) is linked at Asn204. UDP-alpha-D-glucose-binding positions include Ser212, Arg218, and 274–279; that span reads VAASFR. N-linked (GlcNAc...) asparagine glycosylation occurs at Asn373. Positions 389–392 match the Prevents secretion from ER motif; the sequence is KTEL.

Belongs to the glycosyltransferase 90 family.

It localises to the endoplasmic reticulum lumen. The enzyme catalyses L-seryl-[EGF-like domain protein] + UDP-alpha-D-xylose = 3-O-(beta-D-xylosyl)-L-seryl-[EGF-like domain protein] + UDP + H(+). The catalysed reaction is L-seryl-[EGF-like domain protein] + UDP-alpha-D-glucose = 3-O-(beta-D-glucosyl)-L-seryl-[EGF-like domain protein] + UDP + H(+). It participates in protein modification; protein glycosylation. Its function is as follows. Dual specificity glycosyltransferase that catalyzes the transfer of glucose and xylose from UDP-glucose and UDP-xylose, respectively, to a serine residue found in the consensus sequence of C-X-S-X-P-C. Specifically targets extracellular EGF repeats of protein such as CRB2, F7, F9 and NOTCH2. Acts as a positive regulator of Notch signaling by mediating O-glucosylation of Notch, leading to regulate muscle development. Notch glucosylation does not affect Notch ligand binding. Required during early development to promote gastrulation: acts by mediating O-glucosylation of CRB2, which is required for CRB2 localization to the cell membrane. The polypeptide is Protein O-glucosyltransferase 1 (Poglut1) (Rattus norvegicus (Rat)).